The following is a 383-amino-acid chain: tRNA-specific 2-thiouridylase MnmA (383 aa).

ATP-binding positions include Gly-31 to Ser-38 and Leu-57. The Nucleophile role is filled by Cys-118. An intrachain disulfide couples Cys-118 to Cys-217. Gly-143 is an ATP binding site. The interval Lys-167–Gln-169 is interaction with tRNA. Cys-217 (cysteine persulfide intermediate) is an active-site residue. Residues Arg-322 to Tyr-323 are interaction with tRNA.

Belongs to the MnmA/TRMU family.

The protein localises to the cytoplasm. The catalysed reaction is S-sulfanyl-L-cysteinyl-[protein] + uridine(34) in tRNA + AH2 + ATP = 2-thiouridine(34) in tRNA + L-cysteinyl-[protein] + A + AMP + diphosphate + H(+). In terms of biological role, catalyzes the 2-thiolation of uridine at the wobble position (U34) of tRNA, leading to the formation of s(2)U34. The sequence is that of tRNA-specific 2-thiouridylase MnmA from Synechococcus sp. (strain RCC307).